The chain runs to 229 residues: Peptidase E (229 aa).

Catalysis depends on charge relay system residues S120, D135, and H157.

The protein belongs to the peptidase S51 family.

The protein resides in the cytoplasm. The enzyme catalyses Dipeptidase E catalyzes the hydrolysis of dipeptides Asp-|-Xaa. It does not act on peptides with N-terminal Glu, Asn or Gln, nor does it cleave isoaspartyl peptides.. Its function is as follows. Hydrolyzes dipeptides containing N-terminal aspartate residues. May play a role in allowing the cell to use peptide aspartate to spare carbon otherwise required for the synthesis of the aspartate family of amino acids. In Salmonella schwarzengrund (strain CVM19633), this protein is Peptidase E.